A 545-amino-acid chain; its full sequence is Membrane protein insertase YidC (545 aa).

Residues 6–26 traverse the membrane as a helical segment; it reads NILLIGLLFVSFLLWQQWQAD. The disordered stretch occupies residues 44 to 65; sequence STVADAHSSDVPDADSAVPEAT. Helical transmembrane passes span 346 to 366, 424 to 444, 461 to 481, and 504 to 524; these read LLMF…LITL, GGCL…WVLL, LSVQ…MFVM, and VIFT…WLVG.

This sequence belongs to the OXA1/ALB3/YidC family. Type 1 subfamily. In terms of assembly, interacts with the Sec translocase complex via SecD. Specifically interacts with transmembrane segments of nascent integral membrane proteins during membrane integration.

The protein resides in the cell inner membrane. Its function is as follows. Required for the insertion and/or proper folding and/or complex formation of integral membrane proteins into the membrane. Involved in integration of membrane proteins that insert both dependently and independently of the Sec translocase complex, as well as at least some lipoproteins. Aids folding of multispanning membrane proteins. This chain is Membrane protein insertase YidC, found in Shewanella pealeana (strain ATCC 700345 / ANG-SQ1).